Consider the following 424-residue polypeptide: UDP-sugar transporter protein SLC35A5 (424 aa).

Residues 1–8 are Cytoplasmic-facing; sequence MEKQCCSH. The chain crosses the membrane as a helical span at residues 9–29; that stretch reads PVICSLSTMYTFLLGAIFIAL. Residues 30-53 lie on the Lumenal side of the membrane; sequence SSSRILLVKYSANEENKYDYLPTT. Residues 54–74 traverse the membrane as a helical segment; sequence VNVCSELVKLVFCVLVSFCVI. Over 75–93 the chain is Cytoplasmic; the sequence is KKDHQSRNLKYASWKEFSD. The chain crosses the membrane as a helical span at residues 94 to 116; sequence FMKWSIPAFLYFLDNLIVFYVLS. Residues 117 to 119 are Lumenal-facing; the sequence is YLQ. The chain crosses the membrane as a helical span at residues 120-142; it reads PAMAVIFSNFSIITTALLFRIVL. The Cytoplasmic portion of the chain corresponds to 143–147; the sequence is KRRLN. The helical transmembrane segment at 148–168 threads the bilayer; the sequence is WIQWASLLTLFLSIVALTAGT. Residues 169-228 are Lumenal-facing; sequence KTLQHNLAGRGFHHDAFFSPSNSCLLFRSECPRKDNCTAKEWTFPEAKWNTTARVFSHIR. The N-linked (GlcNAc...) asparagine glycan is linked to asparagine 204. A helical transmembrane segment spans residues 229 to 249; it reads LGMGHVLIIVQCFISSMANIY. Residues 250-263 lie on the Cytoplasmic side of the membrane; sequence NEKILKEGNQLTES. Residues 264 to 284 traverse the membrane as a helical segment; it reads IFIQNSKLYFFGILFNGLTLG. At 285-303 the chain is on the lumenal side; sequence LQRSNRDQIKNCGFFYGHS. A helical membrane pass occupies residues 304–324; sequence AFSVALIFVTAFQGLSVAFIL. At 325–330 the chain is on the cytoplasmic side; the sequence is KFLDNM. Residues 331-351 form a helical membrane-spanning segment; the sequence is FHVLMAQVTTVIITTVSVLVF. The Lumenal portion of the chain corresponds to 352-354; that stretch reads DFR. A helical membrane pass occupies residues 355–375; it reads PSLEFFLEAPSVLLSIFIYNA. The Cytoplasmic segment spans residues 376-424; the sequence is SKPQVPEYAPRQERIRDLSGNLWERSSGDGEELERLTKPKSDESDEDTF. A phosphoserine mark is found at serine 394, serine 416, and serine 419. A disordered region spans residues 397–424; that stretch reads LWERSSGDGEELERLTKPKSDESDEDTF. Positions 408–417 are enriched in basic and acidic residues; that stretch reads LERLTKPKSD.

It belongs to the nucleotide-sugar transporter family. SLC35A subfamily. As to quaternary structure, probably forms homooligomers and heterooligomers with SLC35A1, SLC35A2, SLC35A3 and SLC35A4.

It is found in the golgi apparatus membrane. It catalyses the reaction UMP(out) + UDP-alpha-D-glucuronate(in) = UMP(in) + UDP-alpha-D-glucuronate(out). The catalysed reaction is UMP(out) + UDP-N-acetyl-alpha-D-glucosamine(in) = UMP(in) + UDP-N-acetyl-alpha-D-glucosamine(out). The enzyme catalyses UDP-N-acetyl-alpha-D-galactosamine(in) + UMP(out) = UDP-N-acetyl-alpha-D-galactosamine(out) + UMP(in). In terms of biological role, probable UDP-sugar:UMP transmembrane antiporter involved in UDP-alpha-D-glucuronate/UDP-GlcA, UDP-GlcNAc/UDP-N-acetyl-alpha-D-glucosamine and UDP-N-acetyl-alpha-D-galactosamine/UDP-GalNAc transport from the cytosol to the lumen of the Golgi. The protein is UDP-sugar transporter protein SLC35A5 of Homo sapiens (Human).